We begin with the raw amino-acid sequence, 701 residues long: Putative pectinesterase/pectinesterase inhibitor 43 (701 aa).

Residues 1–22 (MNKYVLLGVTALIMAMVICVEA) form the signal peptide. A pectinesterase inhibitor 43 region spans residues 42 to 195 (MITKTTVSII…QHLTSNGLAI (154 aa)). 2 stretches are compositionally biased toward low complexity: residues 221–256 (GILG…VDSS) and 263–275 (SSSE…SSNN). The interval 221–351 (GILGSGSSRD…DPLRKLNPLN (131 aa)) is disordered. The N-linked (GlcNAc...) asparagine glycan is linked to asparagine 267. 2 stretches are compositionally biased toward polar residues: residues 276-287 (RPLDSSKNQQME) and 313-338 (QKST…SSEN). The pectinesterase 43 stretch occupies residues 391–688 (NVVVAKDGSG…FAPGNFLRGN (298 aa)). Substrate is bound by residues threonine 467 and glutamine 497. Catalysis depends on aspartate 520, which acts as the Proton donor; for pectinesterase activity. An intrachain disulfide couples cysteine 534 to cysteine 554. Aspartate 541 acts as the Nucleophile; for pectinesterase activity in catalysis. Arginine 609 and tryptophan 611 together coordinate substrate. The N-linked (GlcNAc...) asparagine glycan is linked to asparagine 637.

This sequence in the N-terminal section; belongs to the PMEI family. The protein in the C-terminal section; belongs to the pectinesterase family. As to expression, expressed in flower buds.

It localises to the secreted. It is found in the cell wall. The catalysed reaction is [(1-&gt;4)-alpha-D-galacturonosyl methyl ester](n) + n H2O = [(1-&gt;4)-alpha-D-galacturonosyl](n) + n methanol + n H(+). It functions in the pathway glycan metabolism; pectin degradation; 2-dehydro-3-deoxy-D-gluconate from pectin: step 1/5. In terms of biological role, acts in the modification of cell walls via demethylesterification of cell wall pectin. This chain is Putative pectinesterase/pectinesterase inhibitor 43 (PME43), found in Arabidopsis thaliana (Mouse-ear cress).